The sequence spans 242 residues: uncharacterized protein (242 aa).

The segment covering 57 to 67 (SPTSQKTSASG) has biased composition (polar residues). The tract at residues 57–78 (SPTSQKTSASGQEEPDPLHDKS) is disordered. The DUF1279 domain maps to 76–188 (DKSSGLIQRF…GYMSTPPPVK (113 aa)). A helical transmembrane segment spans residues 92 to 114 (YGKVMIPVHLLTSTMWFGTFYYA). Residues 188–237 (KEYLQEKMEETKERISGKMEETKDRFSERMEETKDKFNEKLQETKDKVSF) adopt a coiled-coil conformation. The span at 198 to 236 (TKERISGKMEETKDRFSERMEETKDKFNEKLQETKDKVS) shows a compositional bias: basic and acidic residues. The disordered stretch occupies residues 198-242 (TKERISGKMEETKDRFSERMEETKDKFNEKLQETKDKVSFRKKKE).

It localises to the membrane. This is an uncharacterized protein from Danio rerio (Zebrafish).